A 361-amino-acid polypeptide reads, in one-letter code: Inner kinetochore subunit CNN1 (361 aa).

The tract at residues 1–22 is disordered; the sequence is MSTPRKAAGNNENTEVSEIRTP. At Ser-2 the chain carries Phosphoserine; by CDK1. Thr-14 carries the post-translational modification Phosphothreonine; by CDK1 and MPS1. Ser-17 carries the post-translational modification Phosphoserine; by CDK1 and MPS1. Residues Thr-21 and Thr-42 each carry the phosphothreonine; by CDK1 modification. Ser-50 carries the post-translational modification Phosphoserine; by CDK1 and MPS1. The residue at position 52 (Ser-52) is a Phosphoserine; by CDK1. Thr-53 bears the Phosphothreonine; by MPS1 mark. At Ser-55 the chain carries Phosphoserine; by CDK1. The segment at 60–84 is interacts with the NDC80 complex subunits SPC24 and SPC25 and with the KNL1 complex; it reads NKDPNEVRSFLQDLSQVLARKSQGN. Position 74 is a phosphoserine; by CDK1 and MPS1 (Ser-74). Phosphothreonine; by MPS1 occurs at positions 86 and 88. Residue Thr-91 is modified to Phosphothreonine; by CDK1 and MPS1. Residues 103-132 are disordered; it reads EESQPEENELLRSRSEKLTDNNIGNETQPD. Residues 111–121 show a composition bias toward basic and acidic residues; that stretch reads ELLRSRSEKLT. Phosphoserine; by CDK1 is present on Ser-115. Over residues 122-132 the composition is skewed to polar residues; that stretch reads DNNIGNETQPD. A Phosphothreonine; by CDK1 and MPS1 modification is found at Thr-129. Thr-134 bears the Phosphothreonine; by MPS1 mark. Ser-135 bears the Phosphoserine; by MPS1 mark. At Thr-139 the chain carries Phosphothreonine; by CDK1 and MPS1. Ser-153 is subject to Phosphoserine; by MPS1. Thr-174 bears the Phosphothreonine; by MPS1 mark. Phosphoserine; by CDK1 is present on Ser-177. Thr-191 is modified (phosphothreonine; by CDK1). Position 192 is a phosphoserine; by CDK1 (Ser-192). Residues 193–255 are disordered; sequence PSIGMDQVDE…SDENLDDIGN (63 aa). Residues 219 to 254 are compositionally biased toward acidic residues; sequence PLSEDLPSDDKEETEEAENEDYSFENTSDENLDDIG. Ser-268 is modified (phosphoserine; by CDK1). Ser-269 is subject to Phosphoserine; by MPS1 and IPL1.

It belongs to the CENP-T/CNN1 family. In terms of assembly, component of the inner kinetochore constitutive centromere-associated network (CCAN) (also known as central kinetochore CTF19 complex in yeast), which is composed of at least AME1, CHL4, CNN1, CTF3, CTF19, IML3, MCM16, MCM21, MCM22, MHF1, MHF2, MIF2, NKP1, NKP2, OKP1 and WIP1. Interacts (via N-terminus) with the outer kinetochore NDC80 complex subunits SPC24 (via C-terminus) and SPC25 (via C-terminus); the interaction is direct and contributes to the correct spatiotemporal organization of the KMN network. Interacts with outer kinetochore MIS12 complex subunit NNF1. Interacts (via N-terminus) with the KNL1 complex. Post-translationally, phosphorylation of the C-terminus by MPS1 kinase regulates interaction with the outer kinetochore Ndc80 complex. Phosphorylation levels rise from S-phase and through metaphase, the protein is thendephosphorylated in anaphase.

It localises to the nucleus. The protein resides in the chromosome. The protein localises to the centromere. Its subcellular location is the kinetochore. Functionally, component of the kinetochore, a multiprotein complex that assembles on centromeric DNA and attaches chromosomes to spindle microtubules, mediating chromosome segregation and sister chromatid segregation during meiosis and mitosis. Component of the inner kinetochore constitutive centromere-associated network (CCAN), which serves as a structural platform for outer kinetochore assembly. Modulates outer kinetochore KMN network activity by regulating interactions within the network. The chain is Inner kinetochore subunit CNN1 (CNN1) from Saccharomyces cerevisiae (strain ATCC 204508 / S288c) (Baker's yeast).